The sequence spans 520 residues: Peptide chain release factor 3 (520 aa).

The 270-residue stretch at 8-277 folds into the tr-type G domain; it reads ESRKTFAIIS…FAPMPNARQT (270 aa). GTP contacts are provided by residues 17–24, 85–89, and 139–142; these read SHPDAGKT, DTPGH, and NKLD.

It belongs to the TRAFAC class translation factor GTPase superfamily. Classic translation factor GTPase family. PrfC subfamily.

It is found in the cytoplasm. In terms of biological role, increases the formation of ribosomal termination complexes and stimulates activities of RF-1 and RF-2. It binds guanine nucleotides and has strong preference for UGA stop codons. It may interact directly with the ribosome. The stimulation of RF-1 and RF-2 is significantly reduced by GTP and GDP, but not by GMP. In Staphylococcus aureus (strain MRSA252), this protein is Peptide chain release factor 3.